The primary structure comprises 324 residues: o-succinylbenzoate synthase (324 aa).

Lys135 serves as the catalytic Proton donor. Positions 163, 192, and 215 each coordinate Mg(2+). The active-site Proton acceptor is the Lys237.

It belongs to the mandelate racemase/muconate lactonizing enzyme family. MenC type 1 subfamily. A divalent metal cation is required as a cofactor.

It carries out the reaction (1R,6R)-6-hydroxy-2-succinyl-cyclohexa-2,4-diene-1-carboxylate = 2-succinylbenzoate + H2O. It functions in the pathway quinol/quinone metabolism; 1,4-dihydroxy-2-naphthoate biosynthesis; 1,4-dihydroxy-2-naphthoate from chorismate: step 4/7. It participates in quinol/quinone metabolism; menaquinone biosynthesis. In terms of biological role, converts 2-succinyl-6-hydroxy-2,4-cyclohexadiene-1-carboxylate (SHCHC) to 2-succinylbenzoate (OSB). The protein is o-succinylbenzoate synthase of Aliivibrio fischeri (strain ATCC 700601 / ES114) (Vibrio fischeri).